Here is a 302-residue protein sequence, read N- to C-terminus: tRNA-cytidine(32) 2-sulfurtransferase (302 aa).

Residues 45–50 (SGGKDS) carry the PP-loop motif motif. [4Fe-4S] cluster is bound by residues Cys120, Cys123, and Cys211.

This sequence belongs to the TtcA family. In terms of assembly, homodimer. Requires Mg(2+) as cofactor. [4Fe-4S] cluster is required as a cofactor.

The protein localises to the cytoplasm. The catalysed reaction is cytidine(32) in tRNA + S-sulfanyl-L-cysteinyl-[cysteine desulfurase] + AH2 + ATP = 2-thiocytidine(32) in tRNA + L-cysteinyl-[cysteine desulfurase] + A + AMP + diphosphate + H(+). The protein operates within tRNA modification. Functionally, catalyzes the ATP-dependent 2-thiolation of cytidine in position 32 of tRNA, to form 2-thiocytidine (s(2)C32). The sulfur atoms are provided by the cysteine/cysteine desulfurase (IscS) system. The protein is tRNA-cytidine(32) 2-sulfurtransferase of Aeromonas hydrophila subsp. hydrophila (strain ATCC 7966 / DSM 30187 / BCRC 13018 / CCUG 14551 / JCM 1027 / KCTC 2358 / NCIMB 9240 / NCTC 8049).